The sequence spans 209 residues: rRNA N(6)-adenosine-methyltransferase METTL5 (209 aa).

S-adenosyl-L-methionine-binding positions include Gln-28, Thr-31, Gly-59, Cys-62, Val-64, Asp-81, and 108 to 109; that span reads DV.

The protein belongs to the methyltransferase superfamily. PrmA family. In terms of assembly, heterodimer; heterodimerizes with TRMT112. As to expression, expressed from very early development (8 post-conceptual weeks) and expression persists through adulthood in multiple substructures of the brain, including the cerebellar cortex, hippocampus, and striatum.

It localises to the nucleus. The protein localises to the presynapse. The protein resides in the postsynapse. It catalyses the reaction adenosine(1832) in 18S rRNA + S-adenosyl-L-methionine = N(6)-methyladenosine(1832) in 18S rRNA + S-adenosyl-L-homocysteine + H(+). Its activity is regulated as follows. rRNA N6-adenosine-methyltransferase activity is inhibited by zinc. Catalytic subunit of a heterodimer with TRMT112, which specifically methylates the 6th position of adenine in position 1832 of 18S rRNA. N6-methylation of adenine(1832) in 18S rRNA resides in the decoding center of 18S rRNA and is required for translation and embryonic stem cells (ESCs) pluripotency and differentiation. The chain is rRNA N(6)-adenosine-methyltransferase METTL5 from Homo sapiens (Human).